The chain runs to 307 residues: Probable thioesterase KK1J (307 aa).

This sequence belongs to the AMT4 thioesterase family.

The protein operates within secondary metabolite biosynthesis. Probable thioesterase; part of the gene cluster that mediates the biosynthesis of KK-1, a novel cyclic depsipeptide with 10 residues which is a promising active compound with high activity against many plant pathogens, especially Botrytis cinerea. Within the pathway, kk1J is not essential for the biosynthesis of KK-1, but plays a role for efficient production via correction of peptide chain synthesis by kk1B. The nonribosomal peptide synthetase (NRPS) kk1B catalyzes the elongation and cyclization of the decapeptide chain composed of 1 D-lactic acid residue (D-Lac), 1 pipecolic acid residue (Pip), 1 aspartic acid residue (Asp), 1 isoleucine residue (Ile), 1 glycine residue (Gly), 1 tyrosine residue (Tyr) and 4 valine residues (Val). The Asp, Ile and 3 Val residues are N-methylated by the 5 methyltransferase domains from the NRPS (found in modules 3, 5, 6, 7 and 9), whereas the Tyr residue is O-methylated by the cluster encoded O-methyltransferase kk1A. The thioesterase kk1J is likely to be involved in the corrective mechanism of peptide chain synthesis. The D-lactate dehydrogenase kk1H is involved in the synthesis of D-lactic acid from pyruvic acid, which is recognized by the A domain of the first kk1B module. The pyrroline-5-carboxylate reductase kk1I is involved in the synthesis of the L-pipecolic acid residue of KK-1 from delta-1-pyrroline-5-carboxylate (P5C), a metabolic intermediate of lysine. It still is unclear how kk1C and kk1D are involved in the production of KK-1. The chain is Probable thioesterase KK1J from Curvularia clavata.